A 230-amino-acid polypeptide reads, in one-letter code: Interleukin-22 receptor subunit alpha-2 (230 aa).

The N-terminal stretch at 1–20 is a signal peptide; sequence MMPKHCLLGLLIILLSSATE. 2 Fibronectin type-III domains span residues 29–128 and 129–230; these read TPQK…TKLD and PPVV…VHIP. 2 disulfides stabilise this stretch: Cys-77–Cys-85 and Cys-205–Cys-226.

It belongs to the type II cytokine receptor family. Highly expressed in lymph nodes and at lower levels in lung, spleen, and thymus. Not expressed in kidney, liver and heart.

The protein resides in the secreted. Functionally, receptor for IL22. Binds to IL22, prevents interaction with the functional IL-22R complex and blocks the activity of IL22 (in vitro). May play an important role as an IL22 antagonist in the regulation of inflammatory responses. The sequence is that of Interleukin-22 receptor subunit alpha-2 (Il22ra2) from Mus musculus (Mouse).